The sequence spans 707 residues: Dendrin (707 aa).

Disordered regions lie at residues 1-22, 67-86, 94-195, 213-273, and 342-377; these read MLDG…DEES, QNRT…RRPW, ATNW…PWGG, AGTA…KKRL, and TEVA…GSEE. Positions 103 to 134 form a coiled coil; the sequence is AEVRAREQEKRKAASQEREAKETERKRRKAGG. Basic and acidic residues predominate over residues 105–127; that stretch reads VRAREQEKRKAASQEREAKETER. The tract at residues 113–131 is nuclear localization; that stretch reads RKAASQEREAKETERKRRK. Residues 186-236 are interaction with MAGI2; it reads GVAWAGPWGGRRPGPPSYEAHLLLRGAAGTAPRRRWDRPPPYVAPPSYEGP. The tract at residues 340-434 is interaction with ACTN1; it reads PVTEVALSGS…LEVWKVTRRA (95 aa). Positions 359-369 are enriched in basic residues; it reads PRSRQHLRGSR. Serine 387 is subject to Phosphoserine. 2 disordered regions span residues 389–421 and 517–707; these read KKPP…EGTE and RVLN…GKRE. The interval 406–707 is interaction with CD2AP and NPHS1; it reads GGTGWKESLG…TRKTPQGKRE (302 aa). 2 stretches are compositionally biased toward basic and acidic residues: residues 524 to 544 and 692 to 707; these read EGRE…EERS and GLVR…GKRE.

In terms of assembly, forms a ternary complex with MAGI2 and SH3KBP1; recruits DDN to the cytoplasm. Interacts with MAGI1. Interacts with ACTN1 and may interact with WWC1. Interacts with the podocyte slit diaphragm proteins CD2AP, NPHS1 and NPHS2; the interaction with CD2AP and NPHS1 is direct. In terms of tissue distribution, specifically expressed in forebrain structures, particularly in neocortex, olfactory bulb, hippocampus, caudate-putamen, and limbic system (at protein level). Also detected in spleen, liver, kidney and placenta (at protein level).

The protein resides in the cell projection. Its subcellular location is the dendritic spine membrane. The protein localises to the cytoplasm. It localises to the endoplasmic reticulum membrane. It is found in the perikaryon. The protein resides in the nucleus. Functionally, promotes apoptosis of kidney glomerular podocytes. Podocytes are highly specialized cells essential to the ultrafiltration of blood, resulting in the extraction of urine and the retention of protein. The sequence is that of Dendrin (Ddn) from Rattus norvegicus (Rat).